A 318-amino-acid polypeptide reads, in one-letter code: Nucleotide-binding protein Lcho_3490 (318 aa).

Residue 35–42 (GISGGGKS) participates in ATP binding. GTP is bound at residue 84-87 (DVRN).

This sequence belongs to the RapZ-like family.

Its function is as follows. Displays ATPase and GTPase activities. This Leptothrix cholodnii (strain ATCC 51168 / LMG 8142 / SP-6) (Leptothrix discophora (strain SP-6)) protein is Nucleotide-binding protein Lcho_3490.